A 629-amino-acid polypeptide reads, in one-letter code: tRNA uridine 5-carboxymethylaminomethyl modification enzyme MnmG (629 aa).

13-18 (GGGHAG) is an FAD binding site. Residue 273–287 (GPRYCPSIEDKVVRF) coordinates NAD(+).

Belongs to the MnmG family. Homodimer. Heterotetramer of two MnmE and two MnmG subunits. It depends on FAD as a cofactor.

It is found in the cytoplasm. Its function is as follows. NAD-binding protein involved in the addition of a carboxymethylaminomethyl (cmnm) group at the wobble position (U34) of certain tRNAs, forming tRNA-cmnm(5)s(2)U34. The protein is tRNA uridine 5-carboxymethylaminomethyl modification enzyme MnmG of Nitrosococcus oceani (strain ATCC 19707 / BCRC 17464 / JCM 30415 / NCIMB 11848 / C-107).